Here is a 250-residue protein sequence, read N- to C-terminus: Triosephosphate isomerase (250 aa).

10–12 lines the substrate pocket; it reads NWK. Residue His96 is the Electrophile of the active site. Glu168 acts as the Proton acceptor in catalysis. Substrate contacts are provided by residues Gly174, Ser214, and 235–236; that span reads GG.

It belongs to the triosephosphate isomerase family. In terms of assembly, homodimer.

It localises to the cytoplasm. The catalysed reaction is D-glyceraldehyde 3-phosphate = dihydroxyacetone phosphate. Its pathway is carbohydrate biosynthesis; gluconeogenesis. It participates in carbohydrate degradation; glycolysis; D-glyceraldehyde 3-phosphate from glycerone phosphate: step 1/1. Its function is as follows. Involved in the gluconeogenesis. Catalyzes stereospecifically the conversion of dihydroxyacetone phosphate (DHAP) to D-glyceraldehyde-3-phosphate (G3P). The chain is Triosephosphate isomerase from Streptococcus suis (strain 98HAH33).